Consider the following 219-residue polypeptide: Probable nicotinate-nucleotide adenylyltransferase (219 aa).

Belongs to the NadD family.

It catalyses the reaction nicotinate beta-D-ribonucleotide + ATP + H(+) = deamido-NAD(+) + diphosphate. Its pathway is cofactor biosynthesis; NAD(+) biosynthesis; deamido-NAD(+) from nicotinate D-ribonucleotide: step 1/1. In terms of biological role, catalyzes the reversible adenylation of nicotinate mononucleotide (NaMN) to nicotinic acid adenine dinucleotide (NaAD). This chain is Probable nicotinate-nucleotide adenylyltransferase, found in Herminiimonas arsenicoxydans.